The sequence spans 945 residues: Isoleucine--tRNA ligase (945 aa).

The short motif at 66–76 (PYANGDIHLGH) is the 'HIGH' region element. E581 provides a ligand contact to L-isoleucyl-5'-AMP. The short motif at 622 to 626 (KMSKS) is the 'KMSKS' region element. K625 serves as a coordination point for ATP. The Zn(2+) site is built by C908, C911, C928, and C931.

The protein belongs to the class-I aminoacyl-tRNA synthetase family. IleS type 1 subfamily. Monomer. The cofactor is Zn(2+).

Its subcellular location is the cytoplasm. It catalyses the reaction tRNA(Ile) + L-isoleucine + ATP = L-isoleucyl-tRNA(Ile) + AMP + diphosphate. Functionally, catalyzes the attachment of isoleucine to tRNA(Ile). As IleRS can inadvertently accommodate and process structurally similar amino acids such as valine, to avoid such errors it has two additional distinct tRNA(Ile)-dependent editing activities. One activity is designated as 'pretransfer' editing and involves the hydrolysis of activated Val-AMP. The other activity is designated 'posttransfer' editing and involves deacylation of mischarged Val-tRNA(Ile). This Burkholderia vietnamiensis (strain G4 / LMG 22486) (Burkholderia cepacia (strain R1808)) protein is Isoleucine--tRNA ligase.